Reading from the N-terminus, the 523-residue chain is Asparagine--tRNA ligase (523 aa).

The segment at 329 to 350 (SARGDTPLAARSTARTPPVRTP) is disordered.

This sequence belongs to the class-II aminoacyl-tRNA synthetase family. As to quaternary structure, homodimer.

It is found in the cytoplasm. It carries out the reaction tRNA(Asn) + L-asparagine + ATP = L-asparaginyl-tRNA(Asn) + AMP + diphosphate + H(+). This Treponema pallidum (strain Nichols) protein is Asparagine--tRNA ligase.